The following is a 214-amino-acid chain: Adenylate kinase (214 aa).

10 to 15 (GAGKGT) provides a ligand contact to ATP. The NMP stretch occupies residues 30–59 (STGDMLRAAVKAGTPLGLEAKKVMDAGQLV). AMP-binding positions include Thr-31, Arg-36, 57–59 (QLV), 85–88 (GFPR), and Gln-92. The segment at 122 to 159 (GRRVHPGSGRVYHIVFNQPKVEGKDDVTGEDLAIRPDD) is LID. Residues Arg-123 and 132–133 (VY) each bind ATP. 2 residues coordinate AMP: Arg-156 and Arg-167. Gln-200 lines the ATP pocket.

It belongs to the adenylate kinase family. Monomer.

It is found in the cytoplasm. It carries out the reaction AMP + ATP = 2 ADP. It functions in the pathway purine metabolism; AMP biosynthesis via salvage pathway; AMP from ADP: step 1/1. Its function is as follows. Catalyzes the reversible transfer of the terminal phosphate group between ATP and AMP. Plays an important role in cellular energy homeostasis and in adenine nucleotide metabolism. This is Adenylate kinase from Shewanella woodyi (strain ATCC 51908 / MS32).